The sequence spans 146 residues: Large ribosomal subunit protein uL14 (146 aa).

The protein belongs to the universal ribosomal protein uL14 family.

This Encephalitozoon cuniculi (strain GB-M1) (Microsporidian parasite) protein is Large ribosomal subunit protein uL14 (RPL23).